The primary structure comprises 396 residues: Chalcone synthase A (396 aa).

C170 is a catalytic residue.

It belongs to the thiolase-like superfamily. Chalcone/stilbene synthases family.

It catalyses the reaction (E)-4-coumaroyl-CoA + 3 malonyl-CoA + 3 H(+) = 2',4,4',6'-tetrahydroxychalcone + 3 CO2 + 4 CoA. The protein operates within secondary metabolite biosynthesis; flavonoid biosynthesis. In terms of biological role, the primary product of this enzyme is 4,2',4',6'-tetrahydroxychalcone (also termed naringenin-chalcone or chalcone) which can under specific conditions spontaneously isomerize into naringenin. This is Chalcone synthase A (CHSA) from Ipomoea purpurea (Common morning glory).